Here is a 138-residue protein sequence, read N- to C-terminus: MLIPRKVKHRKQHHPKKKGTASGGTTVAFGDYGIQALGHAYITNRQIESARIAINRHIKRGGKVWINIFPDRPLTKKPAETRMGSGKGSPEWWVANVKPGRVLFELSYPNEETARQALTRAIHKLPIKARIITREEQF.

The segment covering 1–19 (MLIPRKVKHRKQHHPKKKG) has biased composition (basic residues). The disordered stretch occupies residues 1–24 (MLIPRKVKHRKQHHPKKKGTASGG).

This sequence belongs to the universal ribosomal protein uL16 family. In terms of assembly, part of the 50S ribosomal subunit.

Binds 23S rRNA and is also seen to make contacts with the A and possibly P site tRNAs. The polypeptide is Large ribosomal subunit protein uL16 (Mycobacteroides abscessus (strain ATCC 19977 / DSM 44196 / CCUG 20993 / CIP 104536 / JCM 13569 / NCTC 13031 / TMC 1543 / L948) (Mycobacterium abscessus)).